A 233-amino-acid chain; its full sequence is Phosphoribosylformylglycinamidine synthase subunit PurQ (233 aa).

Positions 3 to 233 (SAVLVFPGIN…GLAQHLAKAA (231 aa)) constitute a Glutamine amidotransferase type-1 domain. The Nucleophile role is filled by C87. Active-site residues include H204 and E206.

Part of the FGAM synthase complex composed of 1 PurL, 1 PurQ and 2 PurS subunits.

The protein resides in the cytoplasm. It carries out the reaction N(2)-formyl-N(1)-(5-phospho-beta-D-ribosyl)glycinamide + L-glutamine + ATP + H2O = 2-formamido-N(1)-(5-O-phospho-beta-D-ribosyl)acetamidine + L-glutamate + ADP + phosphate + H(+). The enzyme catalyses L-glutamine + H2O = L-glutamate + NH4(+). It participates in purine metabolism; IMP biosynthesis via de novo pathway; 5-amino-1-(5-phospho-D-ribosyl)imidazole from N(2)-formyl-N(1)-(5-phospho-D-ribosyl)glycinamide: step 1/2. In terms of biological role, part of the phosphoribosylformylglycinamidine synthase complex involved in the purines biosynthetic pathway. Catalyzes the ATP-dependent conversion of formylglycinamide ribonucleotide (FGAR) and glutamine to yield formylglycinamidine ribonucleotide (FGAM) and glutamate. The FGAM synthase complex is composed of three subunits. PurQ produces an ammonia molecule by converting glutamine to glutamate. PurL transfers the ammonia molecule to FGAR to form FGAM in an ATP-dependent manner. PurS interacts with PurQ and PurL and is thought to assist in the transfer of the ammonia molecule from PurQ to PurL. In Rhodopseudomonas palustris (strain ATCC BAA-98 / CGA009), this protein is Phosphoribosylformylglycinamidine synthase subunit PurQ.